Here is a 356-residue protein sequence, read N- to C-terminus: Branched-chain-amino-acid transaminase 1 (356 aa).

The residue at position 197 (Lys197) is an N6-(pyridoxal phosphate)lysine.

This sequence belongs to the class-IV pyridoxal-phosphate-dependent aminotransferase family. Pyridoxal 5'-phosphate serves as cofactor.

The catalysed reaction is L-leucine + 2-oxoglutarate = 4-methyl-2-oxopentanoate + L-glutamate. It catalyses the reaction L-isoleucine + 2-oxoglutarate = (S)-3-methyl-2-oxopentanoate + L-glutamate. It carries out the reaction L-valine + 2-oxoglutarate = 3-methyl-2-oxobutanoate + L-glutamate. The protein operates within amino-acid biosynthesis; L-isoleucine biosynthesis; L-isoleucine from 2-oxobutanoate: step 4/4. Its pathway is amino-acid biosynthesis; L-leucine biosynthesis; L-leucine from 3-methyl-2-oxobutanoate: step 4/4. It functions in the pathway amino-acid biosynthesis; L-valine biosynthesis; L-valine from pyruvate: step 4/4. Inhibited by canaline. Functionally, transaminates branched-chain amino acids and ketoglutarate. Involved in the final step of the methionine regeneration pathway, where ketomethiobutyrate (KMTB) is converted to methionine via a transamination. The amino donor preference is isoleucine, leucine, valine, phenylalanine, and tyrosine. The sequence is that of Branched-chain-amino-acid transaminase 1 (ilvE) from Bacillus subtilis (strain 168).